A 324-amino-acid polypeptide reads, in one-letter code: MIQEKAIIIGGGPCGLSAAIHLKQIGIDALVIEKGNVVNSIYNYPTHQTFFSSSEKLEIGDVAFITENRKPVRIQALSYYREVVKRKNIRVNAFEMVRKVTKTQNNTFVIETSKETYTTPYCIIATGYYDHPNYMGVPGEDLPKVFHYFKEGHPYFDKDVVVIGGKNSSVDAALELVKSGARVTVLYRGNEYSPSIKPWILPEFEALVRNGTIRMEFGACVEKITENEVVFRSGEKELITIKNDFVFAMTGYHPDHQFLEKIGVEIDKETGRPFFNEETMETNVEGVFIAGVIAAGNNANEIFIENGRFHGGHIAAEIAKRENH.

S-bacillithiol cysteine disulfide is present on Cys220.

In terms of assembly, interacts with BrxC. Requires FAD as cofactor. Post-translationally, C-terminal Cys can react with bacillithiol (BSH) to form mixed disulfides. S-bacillithiolation protects Cys residues against overoxidation by acting as a redox switch in response to oxidative stress.

Functionally, S-bacillithiolation is the formation of mixed disulfide bonds between protein thiols and the general thiol reductant bacillithiol (BSH) under oxidative stress. BSH is an equivalent of glutathione (GSH) in Firmicutes. This protein is a NADPH-dependent bacilliredoxin reductase, which debacillithiolates (removes BSH) the S-bacillithiolated BrxB (BrxB-SSB), and to a lesser extent BrxC (BrxC-SSB). Involved in a redox cascade increasing the efficacy of BrxB function by reducing BrxB-SSB and thus reactivating it. Has NADPH-dependent oxidase activity under aerobic conditions producing hydrogen peroxide (H(2)O(2)). The chain is Bacilliredoxin reductase Bdr from Bacillus subtilis (strain 168).